Consider the following 249-residue polypeptide: Pyridoxamine 5'-phosphate oxidase family protein ustO (249 aa).

21 to 24 lines the substrate pocket; that stretch reads LFFV. FMN-binding positions include 76-81, 91-92, Arg-105, and 163-164; these read ATVMFC and RL. 215-217 contacts substrate; the sequence is ASY. A helical membrane pass occupies residues 227–247; sequence TGMALMFLVMVVAQWVGYVLY.

This sequence belongs to the pyridoxamine 5'-phosphate oxidase family. Requires FMN as cofactor.

The protein resides in the membrane. The protein operates within mycotoxin biosynthesis. Pyridoxamine 5'-phosphate oxidase family protein; part of the gene cluster that mediates the biosynthesis of the secondary metabolite ustiloxin B, an antimitotic tetrapeptide. First, ustA is processed by the subtilisin-like endoprotease Kex2 that is outside the ustiloxin B gene cluster, at the C-terminal side of Arg-Lys, after transfer to Golgi apparatus through the endoplasmic reticulum (ER). Cleavage by KEX2 generates 16 peptides YAIG-I to YAIG-XVI. To process the precursor peptide further, at least two peptidases are necessary to cleave the N-terminal and C-terminal sides of the Tyr-Ala-Ile-Gly core peptide which serves as backbone for the synthesis of ustiloxin B, through cyclization and modification of the tyrosine with a non-protein coding amino acid, norvaline. One of the two peptidases must be the serine peptidase ustP; and the other pepdidase is probably ustH. Macrocyclization of the core peptide derived from ustA requires the tyrosinase ustQ, as well as the homologous oxidases ustYa and ustYb, and leads to the production of the first cyclization product N-desmethylustiloxin F. For the formation of N-desmethylustiloxin F, three oxidation steps are required, hydroxylation at the benzylic position, hydroxylation at either the aromatic ring of Tyr or beta-position of Ile, and oxidative cyclization. UstQ may catalyze the oxidation of a phenol moiety, whereas the ustYa and ustYb are most likely responsible for the remaining two-step oxidations. N-desmethylustiloxin F is then methylated by ustM to yield ustiloxin F which in turn substrate of the cytochrome P450 monooxygenase ustC which catalyzes the formation of S-deoxyustiloxin H. The flavoprotein monooxygenases ustF1 and ustF2 then participate in the modification of the side chain of S-deoxyustiloxin H, leading to the synthesis of an oxime intermediate, via ustiloxin H. Finally, carboxylative dehydration performed by the cysteine desulfurase-like protein ustD yields ustiloxin B. The polypeptide is Pyridoxamine 5'-phosphate oxidase family protein ustO (Aspergillus flavus (strain ATCC 200026 / FGSC A1120 / IAM 13836 / NRRL 3357 / JCM 12722 / SRRC 167)).